The primary structure comprises 397 residues: Elongation factor Tu-1 (397 aa).

Residues lysine 10–glutamate 206 form the tr-type G domain. Residues glycine 19–threonine 26 are G1. Position 19–26 (glycine 19–threonine 26) interacts with GTP. Threonine 26 lines the Mg(2+) pocket. The tract at residues glycine 62–serine 66 is G2. Residues aspartate 83–glycine 86 are G3. Residues aspartate 83 to histidine 87 and asparagine 138 to aspartate 141 each bind GTP. The interval asparagine 138–aspartate 141 is G4. The segment at serine 176–leucine 178 is G5.

The protein belongs to the TRAFAC class translation factor GTPase superfamily. Classic translation factor GTPase family. EF-Tu/EF-1A subfamily. Monomer.

The protein localises to the cytoplasm. The enzyme catalyses GTP + H2O = GDP + phosphate + H(+). In terms of biological role, GTP hydrolase that promotes the GTP-dependent binding of aminoacyl-tRNA to the A-site of ribosomes during protein biosynthesis. The sequence is that of Elongation factor Tu-1 from Streptomyces coelicolor (strain ATCC BAA-471 / A3(2) / M145).